Reading from the N-terminus, the 734-residue chain is Photosystem I P700 chlorophyll a apoprotein A2 (734 aa).

The next 8 helical transmembrane spans lie at 46–69 (IFAS…FHVA), 135–158 (LYTG…LHLQ), 175–199 (LNHH…HVAI), 273–291 (IAHH…GHMY), 330–353 (LHFQ…QHMY), 369–395 (AALY…IFFI), 417–439 (AIIS…LYVH), and 517–535 (FLVH…LILV). Residues cysteine 559 and cysteine 568 each coordinate [4Fe-4S] cluster. A run of 2 helical transmembrane segments spans residues 575–596 (AFYL…YWHW) and 643–665 (LSVW…MFLI). Histidine 654, methionine 662, and tyrosine 670 together coordinate chlorophyll a. Residue tryptophan 671 participates in phylloquinone binding. A helical membrane pass occupies residues 707 to 727 (LVGLAHFSVGYIFTYAAFLIA).

This sequence belongs to the PsaA/PsaB family. The PsaA/B heterodimer binds the P700 chlorophyll special pair and subsequent electron acceptors. PSI consists of a core antenna complex that captures photons, and an electron transfer chain that converts photonic excitation into a charge separation. The eukaryotic PSI reaction center is composed of at least 11 subunits. Requires P700 is a chlorophyll a/chlorophyll a' dimer, A0 is one or more chlorophyll a, A1 is one or both phylloquinones and FX is a shared 4Fe-4S iron-sulfur center. as cofactor.

Its subcellular location is the plastid. The protein resides in the chloroplast thylakoid membrane. It carries out the reaction reduced [plastocyanin] + hnu + oxidized [2Fe-2S]-[ferredoxin] = oxidized [plastocyanin] + reduced [2Fe-2S]-[ferredoxin]. PsaA and PsaB bind P700, the primary electron donor of photosystem I (PSI), as well as the electron acceptors A0, A1 and FX. PSI is a plastocyanin-ferredoxin oxidoreductase, converting photonic excitation into a charge separation, which transfers an electron from the donor P700 chlorophyll pair to the spectroscopically characterized acceptors A0, A1, FX, FA and FB in turn. Oxidized P700 is reduced on the lumenal side of the thylakoid membrane by plastocyanin. The chain is Photosystem I P700 chlorophyll a apoprotein A2 from Psilotum nudum (Whisk fern).